The primary structure comprises 618 residues: Sulfite reductase [NADPH] flavoprotein alpha-component (618 aa).

A Flavodoxin-like domain is found at 64-202; that stretch reads VTLISASQTG…QAQQWRQQVV (139 aa). Residues 70-75, 117-120, and 153-162 each bind FMN; these read SQTGNA, STQG, and LGDTSYEHFC. In terms of domain architecture, FAD-binding FR-type spans 253 to 467; sequence TAPLTAQLSV…IEHNDNFRLP (215 aa). Residues T341, K375, 405–408, 423–425, Y429, and 438–441 contribute to the FAD site; these read RLYS, TVG, and GGAS. NADP(+) contacts are provided by residues 538 to 539, 544 to 548, and D580; these read SR and KIYVQ. Y618 serves as a coordination point for FAD.

Belongs to the NADPH-dependent sulphite reductase flavoprotein subunit CysJ family. The protein in the N-terminal section; belongs to the flavodoxin family. This sequence in the C-terminal section; belongs to the flavoprotein pyridine nucleotide cytochrome reductase family. Alpha(8)-beta(8). The alpha component is a flavoprotein, the beta component is a hemoprotein. The cofactor is FAD. Requires FMN as cofactor.

The catalysed reaction is hydrogen sulfide + 3 NADP(+) + 3 H2O = sulfite + 3 NADPH + 4 H(+). The protein operates within sulfur metabolism; hydrogen sulfide biosynthesis; hydrogen sulfide from sulfite (NADPH route): step 1/1. In terms of biological role, component of the sulfite reductase complex that catalyzes the 6-electron reduction of sulfite to sulfide. This is one of several activities required for the biosynthesis of L-cysteine from sulfate. The flavoprotein component catalyzes the electron flow from NADPH -&gt; FAD -&gt; FMN to the hemoprotein component. This Yersinia pseudotuberculosis serotype I (strain IP32953) protein is Sulfite reductase [NADPH] flavoprotein alpha-component.